Here is a 419-residue protein sequence, read N- to C-terminus: MRLTPSLISCLSLLHFTSALVAFPGAEGFGANAVGGRQGVVYVVSNLNDSGEGSLRDAVSQPGRIVVFSVGGVIEITDRIVVSKQVTILGQTAPGDGITVYGNGWSFSNADDAIVRYIRIRMGKGGSSGKDAMGIADGKNMIFDHVSVSWGRDETFSINGDVSNVTIQNSIIAQGLETHSCGGLMQTDGGVSLFRNLYIDNKTRNPKVKGVNEFTNNVIYNWGGGGGYIAGGSDGESNVNVIGNYFISGLDTSVTAFTRGNENFHAYVETNYYDSDKDGTLNGSELGVDSTNYGGMDLVTEKYDYPAVASVLSPDDALTYVTKYAGASKVRDSVDTQLVAQVESYGKDGALISDEADMGGAGDLDQGTTPTDTDGDGIPDDAEAELGTDPNTADSMDLDTSGYTFLEVWANSLVPSSYA.

An N-terminal signal peptide occupies residues 1–19; sequence MRLTPSLISCLSLLHFTSA. Residues Asn48, Asn164, and Asn201 are each glycosylated (N-linked (GlcNAc...) asparagine). Arg204 is an active-site residue. In terms of domain architecture, EF-hand spans 261–296; it reads NENFHAYVETNYYDSDKDGTLNGSELGVDSTNYGGM. Residues Asp274, Asp276, Asp278, and Thr280 each coordinate Ca(2+). Asn282 is a glycosylation site (N-linked (GlcNAc...) asparagine). Glu285 provides a ligand contact to Ca(2+). The tract at residues 352 to 395 is disordered; the sequence is ISDEADMGGAGDLDQGTTPTDTDGDGIPDDAEAELGTDPNTADS. A compositionally biased stretch (low complexity) spans 363 to 372; that stretch reads DLDQGTTPTD. Residues 373 to 386 are compositionally biased toward acidic residues; it reads TDGDGIPDDAEAEL.

The protein belongs to the polysaccharide lyase 1 family. Requires Ca(2+) as cofactor.

It localises to the secreted. The enzyme catalyses Eliminative cleavage of (1-&gt;4)-alpha-D-galacturonan to give oligosaccharides with 4-deoxy-alpha-D-galact-4-enuronosyl groups at their non-reducing ends.. Its function is as follows. Pectinolytic enzyme consist of four classes of enzymes: pectin lyase, polygalacturonase, pectin methylesterase and rhamnogalacturonase. Among pectinolytic enzymes, pectin lyase is the most important in depolymerization of pectin, since it cleaves internal glycosidic bonds of highly methylated pectins. Favors pectate, the anion, over pectin, the methyl ester. The protein is Probable pectate lyase C (plyC) of Aspergillus oryzae (strain ATCC 42149 / RIB 40) (Yellow koji mold).